The chain runs to 852 residues: G-type lectin S-receptor-like serine/threonine-protein kinase At4g03230 (852 aa).

The signal sequence occupies residues 1–19 (MILSVFFYMFLLHIRRLDC). Residues 20–154 (FVAVQDSKTL…GNEANVVWQS (135 aa)) form the Bulb-type lectin domain. The Extracellular portion of the chain corresponds to 20–444 (FVAVQDSKTL…RGRGRYGEAK (425 aa)). N-linked (GlcNAc...) asparagine glycans are attached at residues Asn-37, Asn-59, Asn-171, Asn-187, Asn-234, and Asn-243. Residues 285–321 (PRDECSVYNACGNFGSCNSKNEEMCKCLPGFRPNFLE) enclose the EGF-like domain. 2 cysteine pairs are disulfide-bonded: Cys-289-Cys-301 and Cys-295-Cys-309. A PAN domain is found at 339-426 (CGKDGVVVGD…SRNVFIRVAV (88 aa)). The N-linked (GlcNAc...) asparagine glycan is linked to Asn-352. 2 disulfides stabilise this stretch: Cys-373-Cys-400 and Cys-377-Cys-383. The helical transmembrane segment at 445-465 (TPVVLIIVVTFTSAAILVVLS) threads the bilayer. Residues 466 to 852 (STASYVFLQR…ELTITLEDGR (387 aa)) lie on the Cytoplasmic side of the membrane. In terms of domain architecture, Protein kinase spans 532–819 (FSNANKLGQG…TLPTPKQPAF (288 aa)). ATP is bound by residues 538 to 546 (LGQGGFGPV) and Lys-560. Residue Ser-566 is modified to Phosphoserine. A caM-binding region spans residues 621–638 (KLCQRLDWKMRCNIILGI). Asp-657 acts as the Proton acceptor in catalysis. Phosphoserine is present on residues Ser-661 and Ser-674. Thr-691 is subject to Phosphothreonine. Residues 826 to 852 (SSSKASSSTKPETCSENELTITLEDGR) are disordered. A phosphoserine mark is found at Ser-831 and Ser-840. Residues 834 to 845 (TKPETCSENELT) show a composition bias toward polar residues. Thr-847 carries the phosphothreonine modification.

It belongs to the protein kinase superfamily. Ser/Thr protein kinase family.

Its subcellular location is the cell membrane. The enzyme catalyses L-seryl-[protein] + ATP = O-phospho-L-seryl-[protein] + ADP + H(+). The catalysed reaction is L-threonyl-[protein] + ATP = O-phospho-L-threonyl-[protein] + ADP + H(+). This chain is G-type lectin S-receptor-like serine/threonine-protein kinase At4g03230, found in Arabidopsis thaliana (Mouse-ear cress).